The primary structure comprises 444 residues: tRNA-2-methylthio-N(6)-dimethylallyladenosine synthase (444 aa).

The 115-residue stretch at 3 to 117 (RGLYIESYGC…LPELIMKVKR (115 aa)) folds into the MTTase N-terminal domain. [4Fe-4S] cluster is bound by residues C12, C48, C80, C155, C159, and C162. The Radical SAM core domain occupies 141-374 (ANGGVSAYVS…LLTKQQLQFN (234 aa)). Residues 375-441 (KSMEGRVMDV…QNSLEGTVLS (67 aa)) enclose the TRAM domain.

The protein belongs to the methylthiotransferase family. MiaB subfamily. In terms of assembly, monomer. Requires [4Fe-4S] cluster as cofactor.

It localises to the cytoplasm. The enzyme catalyses N(6)-dimethylallyladenosine(37) in tRNA + (sulfur carrier)-SH + AH2 + 2 S-adenosyl-L-methionine = 2-methylsulfanyl-N(6)-dimethylallyladenosine(37) in tRNA + (sulfur carrier)-H + 5'-deoxyadenosine + L-methionine + A + S-adenosyl-L-homocysteine + 2 H(+). In terms of biological role, catalyzes the methylthiolation of N6-(dimethylallyl)adenosine (i(6)A), leading to the formation of 2-methylthio-N6-(dimethylallyl)adenosine (ms(2)i(6)A) at position 37 in tRNAs that read codons beginning with uridine. The polypeptide is tRNA-2-methylthio-N(6)-dimethylallyladenosine synthase (Anaplasma phagocytophilum (strain HZ)).